The chain runs to 527 residues: Probable guanine deaminase (527 aa).

2 residues coordinate Zn(2+): histidine 79 and histidine 81. Residues 81 to 84, 212 to 213, 239 to 242, and aspartate 329 each bind substrate; these read HAPQ, RF, and HISE. Zn(2+) is bound by residues histidine 239 and aspartate 329.

This sequence belongs to the metallo-dependent hydrolases superfamily. ATZ/TRZ family. The cofactor is Zn(2+).

It catalyses the reaction guanine + H2O + H(+) = xanthine + NH4(+). The protein operates within purine metabolism; guanine degradation; xanthine from guanine: step 1/1. Functionally, catalyzes the hydrolytic deamination of guanine, producing xanthine and ammonia. The sequence is that of Probable guanine deaminase from Schizosaccharomyces pombe (strain 972 / ATCC 24843) (Fission yeast).